Consider the following 177-residue polypeptide: Adenine phosphoribosyltransferase (177 aa).

Belongs to the purine/pyrimidine phosphoribosyltransferase family. In terms of assembly, homodimer.

It localises to the cytoplasm. The catalysed reaction is AMP + diphosphate = 5-phospho-alpha-D-ribose 1-diphosphate + adenine. The protein operates within purine metabolism; AMP biosynthesis via salvage pathway; AMP from adenine: step 1/1. Catalyzes a salvage reaction resulting in the formation of AMP, that is energically less costly than de novo synthesis. The polypeptide is Adenine phosphoribosyltransferase (Leptospira interrogans serogroup Icterohaemorrhagiae serovar copenhageni (strain Fiocruz L1-130)).